The primary structure comprises 361 residues: 3-dehydroquinate synthase (361 aa).

Residues 60–65 (DAEAAK), 94–98 (GATTD), 118–119 (TT), K131, and K140 contribute to the NAD(+) site. Residues E173, H242, and H258 each coordinate Zn(2+).

Belongs to the sugar phosphate cyclases superfamily. Dehydroquinate synthase family. Co(2+) serves as cofactor. Zn(2+) is required as a cofactor. It depends on NAD(+) as a cofactor.

The protein localises to the cytoplasm. It carries out the reaction 7-phospho-2-dehydro-3-deoxy-D-arabino-heptonate = 3-dehydroquinate + phosphate. Its pathway is metabolic intermediate biosynthesis; chorismate biosynthesis; chorismate from D-erythrose 4-phosphate and phosphoenolpyruvate: step 2/7. In terms of biological role, catalyzes the conversion of 3-deoxy-D-arabino-heptulosonate 7-phosphate (DAHP) to dehydroquinate (DHQ). In Cutibacterium acnes (strain DSM 16379 / KPA171202) (Propionibacterium acnes), this protein is 3-dehydroquinate synthase.